The following is a 523-amino-acid chain: Maintenance of mitochondrial morphology protein 1 (523 aa).

The Lumenal segment spans residues 1-43 (MAGSTSASLQTPYFPSSTQINPVRVDHTLPLPPAQPSLSFTQG). The helical transmembrane segment at 44–64 (LLVGQLSVVLLIGAFIKFFIF) threads the bilayer. The Cytoplasmic portion of the chain corresponds to 65–523 (GEAPPPPSRG…GSMPDTVTET (459 aa)). 4 disordered regions span residues 70 to 118 (PPSR…SSST), 295 to 349 (TSDQ…SKHG), 420 to 473 (RTGL…IDRG), and 492 to 523 (GGHQNQSGRDGGRGGNEQFAMPGSMPDTVTET). 3 stretches are compositionally biased toward polar residues: residues 74–96 (GLSNRTSTHPRSYSINAASTDSS), 105–118 (STSNILRPVPSSST), and 295–312 (TSDQTMSPIPTPHDTTSE). One can recognise an SMP-LTD domain in the interval 151 to 412 (QPESLDWFNV…EPRVQVVGLP (262 aa)). Over residues 449-467 (GVSGGGGSGGGSGGGGGSM) the composition is skewed to gly residues.

It belongs to the MMM1 family. In terms of assembly, homodimer. Component of the ER-mitochondria encounter structure (ERMES) or MDM complex, composed of MMM1, MDM10, MDM12 and MDM34. An MMM1 homodimer associates with one molecule of MDM12 on each side in a pairwise head-to-tail manner, and the SMP-LTD domains of MMM1 and MDM12 generate a continuous hydrophobic tunnel for phospholipid trafficking.

The protein localises to the endoplasmic reticulum membrane. Component of the ERMES/MDM complex, which serves as a molecular tether to connect the endoplasmic reticulum (ER) and mitochondria. Components of this complex are involved in the control of mitochondrial shape and protein biogenesis, and function in nonvesicular lipid trafficking between the ER and mitochondria. The MDM12-MMM1 subcomplex functions in the major beta-barrel assembly pathway that is responsible for biogenesis of all outer membrane beta-barrel proteins, and acts in a late step after the SAM complex. The MDM10-MDM12-MMM1 subcomplex further acts in the TOM40-specific pathway after the action of the MDM12-MMM1 complex. Essential for establishing and maintaining the structure of mitochondria and maintenance of mtDNA nucleoids. This Paracoccidioides brasiliensis (strain Pb03) protein is Maintenance of mitochondrial morphology protein 1.